Here is a 448-residue protein sequence, read N- to C-terminus: Probable ribonuclease FAU-1 (448 aa).

The tract at residues E426–A448 is disordered. Residues E436–A448 show a composition bias toward polar residues.

It belongs to the FAU-1 family.

Functionally, probable RNase involved in rRNA stability through maturation and/or degradation of precursor rRNAs. Binds to RNA in loop regions with AU-rich sequences. This chain is Probable ribonuclease FAU-1, found in Pyrobaculum islandicum (strain DSM 4184 / JCM 9189 / GEO3).